Here is a 119-residue protein sequence, read N- to C-terminus: Holo-[acyl-carrier-protein] synthase (119 aa).

2 residues coordinate Mg(2+): Asp-8 and Glu-59.

The protein belongs to the P-Pant transferase superfamily. AcpS family. Mg(2+) is required as a cofactor.

Its subcellular location is the cytoplasm. The catalysed reaction is apo-[ACP] + CoA = holo-[ACP] + adenosine 3',5'-bisphosphate + H(+). In terms of biological role, transfers the 4'-phosphopantetheine moiety from coenzyme A to a Ser of acyl-carrier-protein. This Lactococcus lactis subsp. lactis (strain IL1403) (Streptococcus lactis) protein is Holo-[acyl-carrier-protein] synthase.